The chain runs to 89 residues: Small ribosomal subunit protein bS20 (89 aa).

Residues 1–12 (MANIKSAKKRAK) are compositionally biased toward basic residues. The disordered stretch occupies residues 1-24 (MANIKSAKKRAKQTVVRNERNTGQ).

It belongs to the bacterial ribosomal protein bS20 family.

Binds directly to 16S ribosomal RNA. The sequence is that of Small ribosomal subunit protein bS20 from Xanthomonas campestris pv. campestris (strain 8004).